The primary structure comprises 372 residues: GDP-mannose 4,6 dehydratase (372 aa).

The interval Met1 to Pro22 is disordered. N-acetylalanine is present on Ala2. Residues Gly30–Asp35, Arg55–Ser58, Asp86–Leu87, Leu108–Ser112, and Tyr123 contribute to the NADP(+) site. Residue Thr155 is part of the active site. Catalysis depends on nucleophile residues Glu157 and Tyr179. NADP(+) is bound by residues Lys183, His209, and Arg214. A Phosphotyrosine modification is found at Tyr323.

Belongs to the NAD(P)-dependent epimerase/dehydratase family. GDP-mannose 4,6-dehydratase subfamily. NADP(+) is required as a cofactor.

The enzyme catalyses GDP-alpha-D-mannose = GDP-4-dehydro-alpha-D-rhamnose + H2O. The protein operates within nucleotide-sugar biosynthesis; GDP-L-fucose biosynthesis via de novo pathway; GDP-L-fucose from GDP-alpha-D-mannose: step 1/2. Its activity is regulated as follows. Inhibited by GDP-fucose. Catalyzes the conversion of GDP-D-mannose to GDP-4-dehydro-6-deoxy-D-mannose. This Cricetulus griseus (Chinese hamster) protein is GDP-mannose 4,6 dehydratase (GMDS).